We begin with the raw amino-acid sequence, 241 residues long: DnaA regulatory inactivator Hda (241 aa).

It belongs to the DnaA family. HdA subfamily. In terms of assembly, the active form seems to be an ADP-bound monomer. Forms the RIDA complex (regulatory inactivation of DnaA) of ATP-DnaA, ADP-Hda and the DNA-loaded beta sliding clamp (dnaN).

In terms of biological role, mediates the interaction of DNA replication initiator protein DnaA with DNA polymerase subunit beta sliding clamp (dnaN). Stimulates hydrolysis of ATP-DnaA to ADP-DnaA, rendering DnaA inactive for reinitiation, a process called regulatory inhibition of DnaA or RIDA. This is DnaA regulatory inactivator Hda from Salmonella paratyphi A (strain ATCC 9150 / SARB42).